Here is a 409-residue protein sequence, read N- to C-terminus: tRNA(Met) cytidine acetate ligase (409 aa).

ATP-binding positions include 7-20 (VVEYNPMHNGHLHH), Gly-102, Asn-169, and Arg-194.

Belongs to the TmcAL family.

It is found in the cytoplasm. The enzyme catalyses cytidine(34) in elongator tRNA(Met) + acetate + ATP = N(4)-acetylcytidine(34) in elongator tRNA(Met) + AMP + diphosphate. Catalyzes the formation of N(4)-acetylcytidine (ac(4)C) at the wobble position of elongator tRNA(Met), using acetate and ATP as substrates. First activates an acetate ion to form acetyladenylate (Ac-AMP) and then transfers the acetyl group to tRNA to form ac(4)C34. This is tRNA(Met) cytidine acetate ligase from Clostridium botulinum (strain Loch Maree / Type A3).